The following is a 258-amino-acid chain: Global transcriptional regulator CodY (258 aa).

The segment at 1–156 (MSSLLSKTRR…SATIVGMEML (156 aa)) is GAF domain. A DNA-binding region (H-T-H motif) is located at residues 204-223 (ASKIADKVGITRSVIVNALR).

This sequence belongs to the CodY family.

The protein resides in the cytoplasm. In terms of biological role, DNA-binding global transcriptional regulator which is involved in the adaptive response to starvation and acts by directly or indirectly controlling the expression of numerous genes in response to nutrient availability. During rapid exponential growth, CodY is highly active and represses genes whose products allow adaptation to nutrient depletion. This is Global transcriptional regulator CodY from Clostridium botulinum (strain Eklund 17B / Type B).